The sequence spans 227 residues: A-type potassium channel modulatory protein KCNIP1 (227 aa).

In terms of domain architecture, EF-hand 1; degenerate spans 38–94; that stretch reads LEMTMVCHRPEGLEQLEAQTNFTKRELQVLYRGFKNECPSGVVNEETFKQIYAQFFP. 3 consecutive EF-hand domains span residues 97 to 132, 133 to 168, and 181 to 216; these read DASTYAHYLFNAFDTTQTGSVKFEDFVTALSILLRG, TVHEKLRWTFNLYDINKDGYINKEEMMDIVKAIYDM, and TPRQHVDVFFQKMDKNKDGIVTLDEFLESCQEDDNI. Residues aspartate 146, asparagine 148, aspartate 150, tyrosine 152, glutamate 157, aspartate 194, asparagine 196, aspartate 198, and glutamate 205 each coordinate Ca(2+). The tract at residues 214-227 is interaction with KCND2; it reads DNIMRSLQLFQNVM.

Belongs to the recoverin family. In terms of assembly, component of heteromultimeric potassium channels. Identified in potassium channel complexes containing KCND1, KCND2, KCND3, KCNIP1, KCNIP2, KCNIP3, KCNIP4, DPP6 and DPP10. Part of a heterooctamer composed of the tetrameric channel and four KCNIP1 chains. Probably part of a complex consisting of KCNIP1, KCNIP2 isoform 3 and KCND2. Self-associates to form homodimers and homotetramers. Interacts with KCNIP2 isoform 3 in a calcium-dependent manner. Interacts with KCND2; this interaction mediates the capture of both the N- and C-terminus of KCND2, thus preventing KCND2 N-type inactivation and modulates the channel gating kinetics. Interacts with KCND3; each KCNIP1 monomer interacts with two adjacent KCND3 subunits, through both the N-terminal inactivation ball of a KCND3 subunit and a C-terminal helix from the adjacent KCND3 subunit, clamping them together; this interaction stabilizes the tetrameric form and modulates the channel gating kinetics namely channel activation and inactivation kinetics and rate of recovery from inactivation. As to expression, expressed in brain. Found in a subpopulation of neurons widely distributed and enriched in Purkinje cells of the cerebellum and in the reticular thalamic and medial habenular nuclei.

It localises to the cell membrane. Its subcellular location is the cytoplasm. It is found in the cell projection. The protein resides in the dendrite. Its function is as follows. Regulatory subunit of Kv4/D (Shal)-type voltage-gated rapidly inactivating A-type potassium channels. Regulates channel density, inactivation kinetics and rate of recovery from inactivation in a calcium-dependent and isoform-specific manner. Modulates KCND2/Kv4.2 currents. In vitro, modulates KCND1/Kv4.1 currents. Increases the presence of KCND2 at the cell surface. The chain is A-type potassium channel modulatory protein KCNIP1 from Mus musculus (Mouse).